Reading from the N-terminus, the 570-residue chain is Pantothenate kinase 2, mitochondrial (570 aa).

The transit peptide at Met-1–Gly-31 directs the protein to the mitochondrion. Disordered stretches follow at residues Ile-34–Arg-94 and Gly-127–Arg-198. A Nucleolar localization signal motif is present at residues Arg-82 to Arg-94. Positions Arg-84–Ala-93 are enriched in basic residues. Over residues Pro-155–Arg-164 the composition is skewed to basic and acidic residues. Residues Ser-168, Ser-169, and Ser-189 each carry the phosphoserine modification. The segment covering Ser-168–Ala-179 has biased composition (low complexity). The Nuclear export signal motif lies at Leu-268–Leu-275. Glu-338 serves as the catalytic Proton acceptor. Positions 392, 395, and 407 each coordinate acetyl-CoA.

This sequence belongs to the type II pantothenate kinase family. Homodimer. In terms of processing, synthesized as a 62-kDa precursor which is proteolytically processed by the mitochondrial-processing peptidase (MPP) via a 59-kDa intermediate to yield the mature mitochondrial 48-kDa subunit. In terms of tissue distribution, expressed in the brain (at protein level). Ubiquitous. Highly expressed in the testis. Expressed in the umbilical vein endothelial cells (HUVEC).

It is found in the mitochondrion. Its subcellular location is the mitochondrion intermembrane space. The protein localises to the nucleus. It localises to the cytoplasm. The enzyme catalyses (R)-pantothenate + ATP = (R)-4'-phosphopantothenate + ADP + H(+). The protein operates within cofactor biosynthesis; coenzyme A biosynthesis; CoA from (R)-pantothenate: step 1/5. Its activity is regulated as follows. Strongly inhibited by acetyl-CoA and its thioesters. Activated by palmitoylcarnitine. Its function is as follows. Mitochondrial isoform that catalyzes the phosphorylation of pantothenate to generate 4'-phosphopantothenate in the first and rate-determining step of coenzyme A (CoA) synthesis. Required for angiogenic activity of umbilical vein of endothelial cells (HUVEC). Functionally, cytoplasmic isoform that catalyzes the phosphorylation of pantothenate to generate 4'-phosphopantothenate in the first and rate-determining step of coenzyme A (CoA) synthesis. In Homo sapiens (Human), this protein is Pantothenate kinase 2, mitochondrial (PANK2).